We begin with the raw amino-acid sequence, 139 residues long: Ribonuclease VapC36 (139 aa).

Positions 1-127 (MIVDTSAVVA…GNDFPQTDLE (127 aa)) constitute a PINc domain. Positions 4 and 100 each coordinate Mg(2+).

This sequence belongs to the PINc/VapC protein family. The cofactor is Mg(2+).

Its function is as follows. Toxic component of a type II toxin-antitoxin (TA) system. An RNase. Its cognate antitoxin is VapB36. The polypeptide is Ribonuclease VapC36 (Mycobacterium tuberculosis (strain ATCC 25618 / H37Rv)).